The sequence spans 215 residues: Small ribosomal subunit protein uS7 (215 aa).

The protein belongs to the universal ribosomal protein uS7 family. As to quaternary structure, part of the 30S ribosomal subunit.

Its function is as follows. One of the primary rRNA binding proteins, it binds directly to 16S rRNA where it nucleates assembly of the head domain of the 30S subunit. Is located at the subunit interface close to the decoding center. The polypeptide is Small ribosomal subunit protein uS7 (Thermococcus onnurineus (strain NA1)).